Here is a 126-residue protein sequence, read N- to C-terminus: Aspartate 1-decarboxylase (126 aa).

Residue serine 25 is the Schiff-base intermediate with substrate; via pyruvic acid of the active site. Serine 25 carries the pyruvic acid (Ser) modification. Substrate is bound at residue threonine 57. Tyrosine 58 functions as the Proton donor in the catalytic mechanism. 73-75 serves as a coordination point for substrate; that stretch reads GAA.

It belongs to the PanD family. In terms of assembly, heterooctamer of four alpha and four beta subunits. Pyruvate serves as cofactor. Is synthesized initially as an inactive proenzyme, which is activated by self-cleavage at a specific serine bond to produce a beta-subunit with a hydroxyl group at its C-terminus and an alpha-subunit with a pyruvoyl group at its N-terminus.

It localises to the cytoplasm. The catalysed reaction is L-aspartate + H(+) = beta-alanine + CO2. The protein operates within cofactor biosynthesis; (R)-pantothenate biosynthesis; beta-alanine from L-aspartate: step 1/1. Catalyzes the pyruvoyl-dependent decarboxylation of aspartate to produce beta-alanine. In Cellvibrio japonicus (strain Ueda107) (Pseudomonas fluorescens subsp. cellulosa), this protein is Aspartate 1-decarboxylase.